The sequence spans 854 residues: Envelope glycoprotein gp150 (854 aa).

At Met-1–Lys-783 the chain is on the extracellular side. N-linked (GlcNAc...) asparagine; by host glycans are attached at residues Asn-218, Asn-256, Asn-267, Asn-272, Asn-296, Asn-328, Asn-334, Asn-340, Asn-416, Asn-420, Asn-479, Asn-497, Asn-529, Asn-546, and Asn-549. Positions Val-614–Ile-634 are fusion peptide. Residues Gln-641–Ala-691 adopt a coiled-coil conformation. Positions Ile-660–Lys-678 are immunosuppression. N-linked (GlcNAc...) asparagine; by host glycosylation is found at Asn-715, Asn-719, Asn-727, and Asn-735. Positions Tyr-734–Asp-770 form a coiled coil. The chain crosses the membrane as a helical span at residues Gly-784–Pro-804. Residues Thr-805 to Glu-854 lie on the Cytoplasmic side of the membrane.

As to quaternary structure, the mature envelope protein (Env) consists of a trimer of SU-TM heterodimers attached by noncovalent interactions or by a labile interchain disulfide bond. Specific enzymatic cleavages in vivo yield mature proteins. Envelope glycoproteins are synthesized as an inactive precursor that is N-glycosylated and processed likely by host cell furin or by a furin-like protease in the Golgi to yield the mature SU and TM proteins. The cleavage site between SU and TM requires the minimal sequence [KR]-X-[KR]-R.

Its subcellular location is the virion membrane. It localises to the host cell membrane. Its function is as follows. The surface protein (SU) attaches the virus to the host cell by binding to its receptor. This interaction triggers the refolding of the transmembrane protein (TM) and is thought to activate its fusogenic potential by unmasking its fusion peptide. Fusion occurs at the host cell plasma membrane. Functionally, the transmembrane protein (TM) acts as a class I viral fusion protein. Under the current model, the protein has at least 3 conformational states: pre-fusion native state, pre-hairpin intermediate state, and post-fusion hairpin state. During viral and target cell membrane fusion, the coiled coil regions (heptad repeats) assume a trimer-of-hairpins structure, positioning the fusion peptide in close proximity to the C-terminal region of the ectodomain. The formation of this structure appears to drive apposition and subsequent fusion of viral and target cell membranes. Membranes fusion leads to delivery of the nucleocapsid into the cytoplasm. The polypeptide is Envelope glycoprotein gp150 (env) (Feline immunodeficiency virus (isolate Wo) (FIV)).